The chain runs to 440 residues: 3-phosphoshikimate 1-carboxyvinyltransferase (440 aa).

Residues Lys25, Ser26, and Arg30 each contribute to the 3-phosphoshikimate site. Phosphoenolpyruvate is bound at residue Lys25. 2 residues coordinate phosphoenolpyruvate: Gly96 and Arg124. Ser168, Gln169, Asp310, and Lys337 together coordinate 3-phosphoshikimate. Gln169 is a binding site for phosphoenolpyruvate. The Proton acceptor role is filled by Asp310. 3 residues coordinate phosphoenolpyruvate: Arg341, Arg382, and Lys409.

The protein belongs to the EPSP synthase family. As to quaternary structure, monomer.

The protein resides in the cytoplasm. The enzyme catalyses 3-phosphoshikimate + phosphoenolpyruvate = 5-O-(1-carboxyvinyl)-3-phosphoshikimate + phosphate. Its pathway is metabolic intermediate biosynthesis; chorismate biosynthesis; chorismate from D-erythrose 4-phosphate and phosphoenolpyruvate: step 6/7. In terms of biological role, catalyzes the transfer of the enolpyruvyl moiety of phosphoenolpyruvate (PEP) to the 5-hydroxyl of shikimate-3-phosphate (S3P) to produce enolpyruvyl shikimate-3-phosphate and inorganic phosphate. The polypeptide is 3-phosphoshikimate 1-carboxyvinyltransferase (Chlamydia trachomatis serovar A (strain ATCC VR-571B / DSM 19440 / HAR-13)).